Reading from the N-terminus, the 769-residue chain is Portal protein (769 aa).

Residues 458–479 (LEGYVNNLFKTIEGLKDVNSDL) are putative leucine zipper motif. Disordered regions lie at residues 654 to 675 (RGPRRTPSPSWGLPDPTEDDER) and 750 to 769 (RQLTNTSRRGVGCERRDRRS). The span at 760 to 769 (VGCERRDRRS) shows a compositional bias: basic and acidic residues.

This sequence belongs to the herpesviridae portal protein family. As to quaternary structure, homododecamerizes. Interacts with terminase subunits TRM1 and TRM3.

The protein resides in the virion. Its subcellular location is the host nucleus. Its function is as follows. Forms a portal in the viral capsid through which viral DNA is translocated during DNA packaging. Assembles as a dodecamer at a single fivefold axe of the T=16 icosahedric capsid. Binds to the molecular motor that translocates the viral DNA, termed terminase. This chain is Portal protein (54), found in Homo sapiens (Human).